A 257-amino-acid chain; its full sequence is Imidazole glycerol phosphate synthase subunit HisF (257 aa).

Residues Asp-11 and Asp-130 contribute to the active site.

The protein belongs to the HisA/HisF family. Heterodimer of HisH and HisF.

It localises to the cytoplasm. It catalyses the reaction 5-[(5-phospho-1-deoxy-D-ribulos-1-ylimino)methylamino]-1-(5-phospho-beta-D-ribosyl)imidazole-4-carboxamide + L-glutamine = D-erythro-1-(imidazol-4-yl)glycerol 3-phosphate + 5-amino-1-(5-phospho-beta-D-ribosyl)imidazole-4-carboxamide + L-glutamate + H(+). The protein operates within amino-acid biosynthesis; L-histidine biosynthesis; L-histidine from 5-phospho-alpha-D-ribose 1-diphosphate: step 5/9. IGPS catalyzes the conversion of PRFAR and glutamine to IGP, AICAR and glutamate. The HisF subunit catalyzes the cyclization activity that produces IGP and AICAR from PRFAR using the ammonia provided by the HisH subunit. This is Imidazole glycerol phosphate synthase subunit HisF from Shewanella piezotolerans (strain WP3 / JCM 13877).